A 460-amino-acid polypeptide reads, in one-letter code: ERAD-associated E3 ubiquitin-protein ligase HRD1B (460 aa).

The Cytoplasmic portion of the chain corresponds to 1–3 (MIQ). A helical transmembrane segment spans residues 4-24 (LKVYAGLSTLATLVVIYHAFS). The Lumenal portion of the chain corresponds to 25–40 (SRGQFYPATVYLSTSK). The chain crosses the membrane as a helical span at residues 41–61 (INLVVLLNMGLVLMLSLWNLV). Residues 62–98 (KIVFLGSLREAEVERLNEQAWRELMEILFAITIFRQD) lie on the Cytoplasmic side of the membrane. The helical transmembrane segment at 99–119 (FSVGFISLVVTLLLIKGLHWM) threads the bilayer. Over 120–140 (AQKRVEYIETTPSVTLLSHVR) the chain is Lumenal. The chain crosses the membrane as a helical span at residues 141–161 (IVSFMVFLLILDCLLTYSSIQ). Topologically, residues 162-170 (QLIQSRKAS) are cytoplasmic. Residues 171 to 191 (MSVFFTFEYMILATTTVSIIV) traverse the membrane as a helical segment. Topologically, residues 192–225 (KYAFYVTDMLKEGQWEGKPVYTFYLELVRDLLHL) are lumenal. A helical transmembrane segment spans residues 226–246 (SMYLCFFLMIFMNYGLPLHLI). Topologically, residues 247–460 (RELYETFRNF…TKGKSVADTA (214 aa)) are cytoplasmic. An RING-type; atypical zinc finger spans residues 292–330 (CIICREEMTSAKKLVCGHLFHVHCLRSWLERQNTCPTCR). Residues 339–378 (ATSTASGNRGPHQESLQQGTGTSSSDGQGSSVSAAASENM) form a disordered region. Residues 353–375 (SLQQGTGTSSSDGQGSSVSAAAS) show a composition bias toward low complexity.

Belongs to the HRD1 family.

The protein resides in the endoplasmic reticulum membrane. The enzyme catalyses S-ubiquitinyl-[E2 ubiquitin-conjugating enzyme]-L-cysteine + [acceptor protein]-L-lysine = [E2 ubiquitin-conjugating enzyme]-L-cysteine + N(6)-ubiquitinyl-[acceptor protein]-L-lysine.. It participates in protein modification; protein ubiquitination. Probable component of the HRD1 ubiquitin ligase complex that mediates the rapid degradation of misfolded endoplasmic reticulum (ER) proteins, a process called ER-associated degradation (ERAD). Targets the misfolded LRR receptor kinase BRI1. Functions redundantly with HRD3A. This Arabidopsis thaliana (Mouse-ear cress) protein is ERAD-associated E3 ubiquitin-protein ligase HRD1B.